The following is a 73-amino-acid chain: Antimicrobial peptide 6 (73 aa).

An N-terminal signal peptide occupies residues 1–22 (MQIKHLITLFFLVLIVADQCSA). Residues 45–73 (EISTQIDQYRNLQKREAELEELLDRLPMY) constitute a propeptide that is removed on maturation.

The protein belongs to the non-disulfide-bridged peptide (NDBP) superfamily. Short antimicrobial peptide (group 4) family. In terms of tissue distribution, expressed by the venom gland.

The protein resides in the secreted. Functionally, antibacterial peptide. The chain is Antimicrobial peptide 6 from Tityus costatus (Brazilian scorpion).